The sequence spans 689 residues: Small ribosomal subunit protein mS39 (689 aa).

The transit peptide at 1 to 37 (MAGVSAVRWLGLRSRLGQPLTGRRAGLCKQARSCRFY) directs the protein to the mitochondrion. Position 126 is an N6-acetyllysine (Lys126). PPR repeat units lie at residues 149–183 (IKDISEAALKERIELRKVKASVDMFDQLLQAGTTV), 184–219 (SLETTNSLLDLLCYFGDQEPSTDYHFQQTEQSEALE), 255–289 (NAHSYCTMIRGMVKHRAYEQALNLYTELLNNRLHA), 290–330 (DVYT…KVKP), 331–367 (NLQTFNTILKCLRRFHVFARSPALRILREMKAIGIEP), 368–404 (SLATYHHIIHVFDQPGDPLKRSSFIIYDIMNELMGKR), 412–446 (DDKFFQSAMSICSSLRDLELAYQVHGLLNTGDNWK), 454–488 (RNFYYSKFFDLICLMEQIDVTLKWYEDLIPSVYFP), 489–523 (HSQTLIHLLQALDVANRLEMIPKIWKDSKEYGHTF), and 572–606 (PATSLYCIAILFLRAGRTQEAWNMLELFRKHNKIP). The disordered stretch occupies residues 665–689 (NLTALTSDSDTDSSSDSDSDTSEGK). A compositionally biased stretch (acidic residues) spans 673–689 (SDTDSSSDSDSDTSEGK).

This sequence belongs to the mitochondrion-specific ribosomal protein mS39 family. Component of the mitochondrial ribosome small subunit (28S) which comprises a 12S rRNA and about 30 distinct proteins. Associated with the 12S mitochondrial rRNA (12S mt-rRNA).

Its subcellular location is the mitochondrion. Mitochondrial RNA-binding protein that has a role in mitochondrial translation. This chain is Small ribosomal subunit protein mS39 (PTCD3), found in Pongo abelii (Sumatran orangutan).